The following is a 162-amino-acid chain: Protein-export protein SecB 2 (162 aa).

Belongs to the SecB family. Homotetramer, a dimer of dimers. One homotetramer interacts with 1 SecA dimer.

The protein localises to the cytoplasm. In terms of biological role, one of the proteins required for the normal export of preproteins out of the cell cytoplasm. It is a molecular chaperone that binds to a subset of precursor proteins, maintaining them in a translocation-competent state. It also specifically binds to its receptor SecA. The protein is Protein-export protein SecB 2 of Polaromonas naphthalenivorans (strain CJ2).